The primary structure comprises 349 residues: Ribosomal RNA large subunit methyltransferase M (349 aa).

S-adenosyl-L-methionine-binding positions include Ser183, 216 to 219 (APGG), Asp235, Asp255, and Asp271. The active-site Proton acceptor is Lys300.

This sequence belongs to the class I-like SAM-binding methyltransferase superfamily. RNA methyltransferase RlmE family. RlmM subfamily. Monomer.

The protein localises to the cytoplasm. The enzyme catalyses cytidine(2498) in 23S rRNA + S-adenosyl-L-methionine = 2'-O-methylcytidine(2498) in 23S rRNA + S-adenosyl-L-homocysteine + H(+). Catalyzes the 2'-O-methylation at nucleotide C2498 in 23S rRNA. The chain is Ribosomal RNA large subunit methyltransferase M from Stutzerimonas stutzeri (strain A1501) (Pseudomonas stutzeri).